Here is an 813-residue protein sequence, read N- to C-terminus: MRPRPAGALRAGAALSPVLLLLLLLQLLGHLWAASTPAPSSLSPGTQQDNQLGAGRVKRGWVWNQFFVVEEYTGTEPLYVGKIHSDSDEGDGTIKYTISGEGAGTIFLIDELTGDIHATERLDREQKTFYTLRAQARDRATNRLLEPESEFIIKVQDINDSEPRFLHGPYIGSVAELSPTGTSVMQVMASDADDPTYGSSARLVYSVLDGEHHFTVDPKTGVIRTAVPDLDRESQERYEVVIQATDMAGQLGGLSGSTTVTIVVTDVNDNPPRFPQKMYQFSIQESAPIGTAVGRVKAEDSDVGENTDMTYHLREESGSGGDAFKVTTDSDTQEAIIVVQKHLDFESQQVHTVVLEALNKFVDPRFADLGTFRDQAIVRVAVTDVDEPPEFRPPSGLLEVQEDAQVGSLVGVVTARDPDAANRPVRYAIDRDSDLEQIFDIDADTGAIVTGKGLDRETAGWHNITVLAMEADNHAQLSRASLRIRILDVNDNPPELATPYEAAVCEDAKPGQLIQTISVVDRDEPQGGHRFYFRLVPEEPSNPHFSLLDIEDNTAAVHTQHVGFNRQEQDVFLLPILVVDSGPPTLSSTGTLTIRICGCDSSGTIQSCNTTAFVMAASLSPGALIALLVCVLILVVLALLILTLRRHHKSHLSSDVDEDMRDNVIKYNDEGGGEQDTEAYDMSALRSLYDFGELKGGDPGGGAASPPQAASSSERHSLPRGPSSPEPDFSVFRDFISRKVALADADLSVPPYDAFQTYAFEGAGSPAASLSSLHSGSTGSEQDFAFLRAWGPRFRPLAALYAGHRGDDEAPAS.

A signal peptide spans 1-33 (MRPRPAGALRAGAALSPVLLLLLLLQLLGHLWA). At 34 to 621 (ASTPAPSSLS…AFVMAASLSP (588 aa)) the chain is on the extracellular side. Cadherin domains are found at residues 61–165 (WVWN…EPRF), 166–274 (LHGP…PPRF), 275–391 (PQKM…PPEF), 392–495 (RPPS…NPPE), and 496–613 (LATP…TTAF). N159 carries N-linked (GlcNAc...) asparagine glycosylation. N-linked (GlcNAc...) asparagine glycosylation is found at N463 and N609. Residues 622–642 (GALIALLVCVLILVVLALLIL) form a helical membrane-spanning segment. Residues 643 to 813 (TLRRHHKSHL…HRGDDEAPAS (171 aa)) are Cytoplasmic-facing. The tract at residues 696-726 (GGDPGGGAASPPQAASSSERHSLPRGPSSPE) is disordered.

In terms of tissue distribution, strongly expressed in the pituitary gland and the brain (in the inner granular and glomerular layers of the olfactory bulb, anterior olfactory nucleus, primary olfactory cortex, Purkinje cell layer of cerebellum, and pineal gland). Low expression in lung and heart. No expression in submandibular gland, thymus, liver, spleen, adrenal, and kidney.

The protein resides in the cell membrane. Cadherins are calcium-dependent cell adhesion proteins. They preferentially interact with themselves in a homophilic manner in connecting cells; cadherins may thus contribute to the sorting of heterogeneous cell types. PB-cadherins may have a role in the morphological organization of pituitary gland and brain tissues. The chain is Cadherin-22 (Cdh22) from Rattus norvegicus (Rat).